The chain runs to 483 residues: Cobyric acid synthase (483 aa).

In terms of domain architecture, GATase cobBQ-type spans 251-438 (SLVVAVPMLP…LHGVFNADEF (188 aa)). Residue Cys-333 is the Nucleophile of the active site. His-430 is an active-site residue.

Belongs to the CobB/CobQ family. CobQ subfamily.

It functions in the pathway cofactor biosynthesis; adenosylcobalamin biosynthesis. Its function is as follows. Catalyzes amidations at positions B, D, E, and G on adenosylcobyrinic A,C-diamide. NH(2) groups are provided by glutamine, and one molecule of ATP is hydrogenolyzed for each amidation. The sequence is that of Cobyric acid synthase from Brucella anthropi (strain ATCC 49188 / DSM 6882 / CCUG 24695 / JCM 21032 / LMG 3331 / NBRC 15819 / NCTC 12168 / Alc 37) (Ochrobactrum anthropi).